Here is a 172-residue protein sequence, read N- to C-terminus: uncharacterized protein (172 aa).

The segment covering 1-17 has biased composition (basic and acidic residues); sequence MISLDKDENEIEHHNEE. The segment at 1–27 is disordered; it reads MISLDKDENEIEHHNEENSLVEQETAP. Residues 129 to 151 form a helical membrane-spanning segment; sequence IVTVLIGIIVAIFVLVVIGIAAF.

The protein resides in the membrane. This is an uncharacterized protein from Bacillus subtilis (strain 168).